The following is a 270-amino-acid chain: Aliphatic sulfonates import ATP-binding protein SsuB 3 (270 aa).

The region spanning 17–238 is the ABC transporter domain; sequence LAVQNLKKAF…ARGSHRLAAL (222 aa). 49 to 56 lines the ATP pocket; that stretch reads GRSGCGKS.

This sequence belongs to the ABC transporter superfamily. Aliphatic sulfonates importer (TC 3.A.1.17.2) family. The complex is composed of two ATP-binding proteins (SsuB), two transmembrane proteins (SsuC) and a solute-binding protein (SsuA).

The protein resides in the cell inner membrane. It carries out the reaction ATP + H2O + aliphatic sulfonate-[sulfonate-binding protein]Side 1 = ADP + phosphate + aliphatic sulfonateSide 2 + [sulfonate-binding protein]Side 1.. In terms of biological role, part of the ABC transporter complex SsuABC involved in aliphatic sulfonates import. Responsible for energy coupling to the transport system. The protein is Aliphatic sulfonates import ATP-binding protein SsuB 3 of Pseudomonas syringae pv. tomato (strain ATCC BAA-871 / DC3000).